A 124-amino-acid chain; its full sequence is Small ribosomal subunit protein bS6m (124 aa).

This sequence belongs to the bacterial ribosomal protein bS6 family. As to quaternary structure, component of the mitochondrial ribosome small subunit (28S) which comprises a 12S rRNA and about 30 distinct proteins.

The protein resides in the mitochondrion. The protein is Small ribosomal subunit protein bS6m (MRPS6) of Bos taurus (Bovine).